Reading from the N-terminus, the 180-residue chain is UPF0303 protein PSEEN3311 (180 aa).

This sequence belongs to the UPF0303 family.

In Pseudomonas entomophila (strain L48), this protein is UPF0303 protein PSEEN3311.